The chain runs to 162 residues: uncharacterized protein (162 aa).

The signal sequence occupies residues 1 to 19; it reads MARVYILFFSVFFVFPLFS. The next 2 helical transmembrane spans lie at 53–75 and 105–127; these read LSIG…IRLI and IVFG…YRAV.

It is found in the cell membrane. This is an uncharacterized protein from Treponema pallidum (strain Nichols).